The sequence spans 326 residues: uncharacterized protein (326 aa).

127–134 (GATGSGKS) serves as a coordination point for ATP.

The protein belongs to the GSP E family.

This is an uncharacterized protein from Escherichia coli (strain K12).